The chain runs to 419 residues: Protein farnesyltransferase subunit beta (419 aa).

PFTB repeat units follow at residues 68–109 (EDNT…ITLG), 119–160 (RNKL…SVLN), 167–208 (IKNV…ILIG), 215–256 (LPRL…ALLQ), and 329–371 (SIAL…SLCQ). (2E,6E)-farnesyl diphosphate is bound by residues 193–196 (HGGY) and 235–238 (RTNK). 2 residues coordinate Zn(2+): D241 and C243. 244-247 (YSFW) is a (2E,6E)-farnesyl diphosphate binding site. A Zn(2+)-binding site is contributed by H359.

This sequence belongs to the protein prenyltransferase subunit beta family. Heterodimer of FTA and FTB. Zn(2+) is required as a cofactor.

It carries out the reaction L-cysteinyl-[protein] + (2E,6E)-farnesyl diphosphate = S-(2E,6E)-farnesyl-L-cysteinyl-[protein] + diphosphate. Its function is as follows. Catalyzes the transfer of a farnesyl moiety from farnesyl diphosphate to a cysteine at the fourth position from the C-terminus of several proteins. The beta subunit FTB is responsible for peptide-binding. This Pisum sativum (Garden pea) protein is Protein farnesyltransferase subunit beta (FTB).